Consider the following 1381-residue polypeptide: Major capsid protein (1381 aa).

It belongs to the herpesviridae major capsid protein family. Homomultimer. Makes the hexons and eleven out of twelve pentons. Interacts with triplex proteins 1/TRX1 and 2/TRX2; adjacent capsomers are linked together in groups of three by triplexes, heterotrimeric complexes composed of one molecule of TRX1 and two molecules of TRX2. Interacts with scaffold protein; this interaction allows efficient MCP transport to the host nucleus. Interacts with capsid vertex component 2/CVC2. Interacts with the small capsomere-interacting protein/SCP.

The protein localises to the virion. It is found in the host nucleus. In terms of biological role, self-assembles to form an icosahedral capsid with a T=16 symmetry, about 200 nm in diameter, and consisting of 150 hexons and 12 pentons (total of 162 capsomers). Hexons form the edges and faces of the capsid and are each composed of six MCP molecules. In contrast, one penton is found at each of the 12 vertices. Eleven of the pentons are MCP pentamers, while the last vertex is occupied by the portal complex. The capsid is surrounded by a layer of proteinaceous material designated the tegument which, in turn, is enclosed in an envelope of host cell-derived lipids containing virus-encoded glycoproteins. The chain is Major capsid protein from Epstein-Barr virus (strain AG876) (HHV-4).